Consider the following 211-residue polypeptide: MKVTAAFAGLLVTALAAPAPEPVLVSRSAGINYVQNYNGNLGDFTYDESAGTFSMYWEDGVSSDFVVGLGWTTGSSNPITYSADYSASGSSSYLAVYGWDNYPQAEYYIVEDYGDYNPCSSATSLGTVYSDGSTYQVCTDTRTNEPSITGTSTFTQYFSVRESTRTSGTVTVANHFNFWAQHGFGNSDFNYQVVAVEAWSGAGSASVTISS.

An N-terminal signal peptide occupies residues 1–16; that stretch reads MKVTAAFAGLLVTALA. A GH11 domain is found at 19-210; the sequence is APEPVLVSRS…GAGSASVTIS (192 aa). Glu-106 serves as the catalytic Nucleophile. Glu-197 serves as the catalytic Proton donor.

This sequence belongs to the glycosyl hydrolase 11 (cellulase G) family.

It localises to the secreted. The enzyme catalyses Endohydrolysis of (1-&gt;4)-beta-D-xylosidic linkages in xylans.. It participates in glycan degradation; xylan degradation. Functionally, endo-1,4-beta-xylanase involved in the hydrolysis of xylan, a major structural heterogeneous polysaccharide found in plant biomass representing the second most abundant polysaccharide in the biosphere, after cellulose. The chain is Endo-1,4-beta-xylanase 6 (XYN6) from Aspergillus niger.